Consider the following 307-residue polypeptide: Aspartate carbamoyltransferase catalytic subunit (307 aa).

The carbamoyl phosphate site is built by arginine 55 and threonine 56. L-aspartate is bound at residue lysine 85. Carbamoyl phosphate-binding residues include arginine 106, histidine 134, and glutamine 137. Arginine 167 and arginine 228 together coordinate L-aspartate. Leucine 266 and proline 267 together coordinate carbamoyl phosphate.

Belongs to the aspartate/ornithine carbamoyltransferase superfamily. ATCase family. In terms of assembly, heterododecamer (2C3:3R2) of six catalytic PyrB chains organized as two trimers (C3), and six regulatory PyrI chains organized as three dimers (R2).

The enzyme catalyses carbamoyl phosphate + L-aspartate = N-carbamoyl-L-aspartate + phosphate + H(+). The protein operates within pyrimidine metabolism; UMP biosynthesis via de novo pathway; (S)-dihydroorotate from bicarbonate: step 2/3. Its function is as follows. Catalyzes the condensation of carbamoyl phosphate and aspartate to form carbamoyl aspartate and inorganic phosphate, the committed step in the de novo pyrimidine nucleotide biosynthesis pathway. This is Aspartate carbamoyltransferase catalytic subunit from Tolumonas auensis (strain DSM 9187 / NBRC 110442 / TA 4).